A 173-amino-acid chain; its full sequence is NADH-quinone oxidoreductase subunit I 1 (173 aa).

4Fe-4S ferredoxin-type domains are found at residues 41-73 and 83-112; these read IVLT…LAKA and EHFR…LTPD. Cys53, Cys56, Cys59, Cys63, Cys92, Cys95, Cys98, and Cys102 together coordinate [4Fe-4S] cluster.

Belongs to the complex I 23 kDa subunit family. NDH-1 is composed of 14 different subunits. Subunits NuoA, H, J, K, L, M, N constitute the membrane sector of the complex. Requires [4Fe-4S] cluster as cofactor.

The protein localises to the cell inner membrane. The enzyme catalyses a quinone + NADH + 5 H(+)(in) = a quinol + NAD(+) + 4 H(+)(out). NDH-1 shuttles electrons from NADH, via FMN and iron-sulfur (Fe-S) centers, to quinones in the respiratory chain. The immediate electron acceptor for the enzyme in this species is believed to be ubiquinone. Couples the redox reaction to proton translocation (for every two electrons transferred, four hydrogen ions are translocated across the cytoplasmic membrane), and thus conserves the redox energy in a proton gradient. The protein is NADH-quinone oxidoreductase subunit I 1 of Rhodopseudomonas palustris (strain BisA53).